Consider the following 232-residue polypeptide: Phosphatidylserine decarboxylase proenzyme (232 aa).

The active-site Schiff-base intermediate with substrate; via pyruvic acid is the Ser190. Ser190 is subject to Pyruvic acid (Ser); by autocatalysis.

Belongs to the phosphatidylserine decarboxylase family. PSD-A subfamily. Heterodimer of a large membrane-associated beta subunit and a small pyruvoyl-containing alpha subunit. It depends on pyruvate as a cofactor. Is synthesized initially as an inactive proenzyme. Formation of the active enzyme involves a self-maturation process in which the active site pyruvoyl group is generated from an internal serine residue via an autocatalytic post-translational modification. Two non-identical subunits are generated from the proenzyme in this reaction, and the pyruvate is formed at the N-terminus of the alpha chain, which is derived from the carboxyl end of the proenzyme. The post-translation cleavage follows an unusual pathway, termed non-hydrolytic serinolysis, in which the side chain hydroxyl group of the serine supplies its oxygen atom to form the C-terminus of the beta chain, while the remainder of the serine residue undergoes an oxidative deamination to produce ammonia and the pyruvoyl prosthetic group on the alpha chain.

Its subcellular location is the cell membrane. It catalyses the reaction a 1,2-diacyl-sn-glycero-3-phospho-L-serine + H(+) = a 1,2-diacyl-sn-glycero-3-phosphoethanolamine + CO2. Its pathway is phospholipid metabolism; phosphatidylethanolamine biosynthesis; phosphatidylethanolamine from CDP-diacylglycerol: step 2/2. In terms of biological role, catalyzes the formation of phosphatidylethanolamine (PtdEtn) from phosphatidylserine (PtdSer). The polypeptide is Phosphatidylserine decarboxylase proenzyme (Sinorhizobium medicae (strain WSM419) (Ensifer medicae)).